Consider the following 295-residue polypeptide: Beta-chimaerin (295 aa).

Residues 41-91 form a Phorbol-ester/DAG-type zinc finger; it reads THNFKVHTFRGPHWCEYCANFMWGLIAQGVRCSDCGLNVHKQCSKHVPNDC. A Rho-GAP domain is found at 104-295; sequence CDLTTLVKAH…ILIENEDVLF (192 aa).

Found in cerebellum and testis.

The protein localises to the membrane. Its activity is regulated as follows. In the inactive state, the N terminus protrudes into the active site of the Rho-GAP domain, sterically blocking Rac binding. Phospholipid binding to the Phorbol-ester/DAG-type zinc-finger/C1 domain triggers the cooperative dissociation of these interactions, allowing the N-terminus to move out of the active site and thereby activating the enzyme. Its function is as follows. GTPase-activating protein for p21-rac. The polypeptide is Beta-chimaerin (Chn2) (Rattus norvegicus (Rat)).